The primary structure comprises 558 residues: Atlastin-1 (558 aa).

The interval 1–27 is disordered; the sequence is MAKNRRDRNSWGGFSEKTYEWSSEEEE. An N-terminal hypervariable region (HVR) region spans residues 1 to 34; that stretch reads MAKNRRDRNSWGGFSEKTYEWSSEEEEPVKKAGP. Topologically, residues 1–449 are cytoplasmic; it reads MAKNRRDRNS…NIFHAARTPA (449 aa). Residues S10, S22, and S23 each carry the phosphoserine modification. The region spanning 64–309 is the GB1/RHD3-type G domain; sequence DKEVVAVSVA…LIPWLLSPES (246 aa). Positions 77, 78, 79, 80, 81, 82, 148, 217, 218, 276, and 279 each coordinate GDP. R77, K78, G79, K80, S81, and F82 together coordinate GTP. S81 provides a ligand contact to Mg(2+). GTP contacts are provided by R217, D218, and V276. The tract at residues 347 to 438 is 3HB (three-helix bundle) domain; it reads MLQATAEANN…YIQYIKHNDS (92 aa). K395 bears the N6-acetyllysine mark. Residues 412 to 439 are a coiled coil; sequence EFSRRYLQQLESEIDELYIQYIKHNDSK. A linker region spans residues 439–447; that stretch reads KNIFHAART. A helical transmembrane segment spans residues 450–470; it reads TLFVVIFITYVIAGVTGFIGL. Position 471 (D471) is a topological domain, lumenal. A helical transmembrane segment spans residues 472 to 492; that stretch reads IIASLCNMIMGLTLITLCTWA. Topologically, residues 493-558 are cytoplasmic; it reads YIRYSGEYRE…STEQSEKKKM (66 aa). Residues 521–558 are autoinhibitory domain; that stretch reads NEALYKLYSAAATHRHLYHQAFPTPKSESTEQSEKKKM.

Belongs to the TRAFAC class dynamin-like GTPase superfamily. GB1/RHD3 GTPase family. GB1 subfamily. Monomeric and homodimeric. The homodimer, transiently formed by two molecules on opposing membranes, is the active form mediating ER membrane fusion. Interacts with REEP1, REEP5, RTN3 and RTN4 (via the transmembrane region); these proteins are involved in endoplasmic reticulum tubular network organization. Interacts with ZFYVE27; both proteins are involved in endoplasmic reticulum tubular network organization. Interacts with ARL6IP1; both proteins are involved in endoplasmic reticulum tubular network organization. Interacts with SPAST; the interaction is direct, could recruit SPAST to Golgi membranes. Interacts (via N-terminal region) with MAP4K4 (via CNH regulatory domain). May interact with TMED2. Interacts with CPT1C. Phosphorylated. Phosphorylation, by different kinases, of the N-terminal hypervariable region (HVR) regulates the ATL1-mediated membrane tethering step.

It is found in the endoplasmic reticulum membrane. The protein resides in the golgi apparatus membrane. Its subcellular location is the cell projection. It localises to the axon. It carries out the reaction GTP + H2O = GDP + phosphate + H(+). Functionally, atlastin-1 (ATL1) is a membrane-anchored GTPase that mediates the GTP-dependent fusion of endoplasmic reticulum (ER) membranes, maintaining the continuous ER network. It facilitates the formation of three-way junctions where ER tubules intersect. Two atlastin-1 on neighboring ER tubules bind GTP and form loose homodimers through the GB1/RHD3-type G domains and 3HB regions. Upon GTP hydrolysis, the 3HB regions tighten, pulling the membranes together to drive their fusion. After fusion, the homodimer disassembles upon release of inorganic phosphate (Pi). Subsequently, GDP dissociates, resetting the monomers to a conformation ready for a new fusion cycle. May also regulate more or less directly Golgi biogenesis. Indirectly regulates axonal development. The chain is Atlastin-1 from Pongo abelii (Sumatran orangutan).